An 846-amino-acid chain; its full sequence is Rho GTPase-activating protein 17 (846 aa).

Residues glutamine 14–glutamate 246 enclose the BAR domain. The Rho-GAP domain occupies threonine 252–phenylalanine 442. The span at threonine 459–glycine 475 shows a compositional bias: polar residues. A disordered region spans residues threonine 459 to proline 482. Phosphoserine is present on residues serine 484 and serine 575. A disordered region spans residues isoleucine 519–serine 807. Residues arginine 592–histidine 619 are compositionally biased toward polar residues. The segment covering alanine 637–histidine 650 has biased composition (pro residues). The segment covering glycine 653–glutamine 690 has biased composition (low complexity). Residues serine 698 and serine 700 each carry the phosphoserine modification. Pro residues-rich tracts occupy residues isoleucine 704 to glutamine 717 and glutamate 726 to proline 741. Threonine 730, threonine 734, and threonine 736 each carry phosphothreonine. The SH3-binding motif lies at threonine 730–leucine 743. Phosphoserine is present on serine 739. At threonine 740 the chain carries Phosphothreonine. A compositionally biased stretch (polar residues) spans glutamine 746 to histidine 757. A compositionally biased stretch (pro residues) spans arginine 772–proline 782. Over residues leucine 791–serine 807 the composition is skewed to polar residues.

As to quaternary structure, component of a complex whose core is composed of ARHGAP17, AMOT, PALS1, PATJ and PARD3/PAR3. Interacts with NHERF1, FNBP1, TRIP10, CAPZA (CAPZA1, CAPZA2 or CAPZA3), CAPZB, CD2AP and SH3KBP1/CIN85.

The protein resides in the membrane. Its subcellular location is the cytoplasm. The protein localises to the cell junction. It localises to the tight junction. Functionally, rho GTPase-activating protein involved in the maintenance of tight junction by regulating the activity of CDC42, thereby playing a central role in apical polarity of epithelial cells. Specifically acts as a GTPase activator for the CDC42 GTPase by converting it to an inactive GDP-bound state. The complex formed with AMOT acts by regulating the uptake of polarity proteins at tight junctions, possibly by deciding whether tight junction transmembrane proteins are recycled back to the plasma membrane or sent elsewhere. Participates in the Ca(2+)-dependent regulation of exocytosis, possibly by catalyzing GTPase activity of Rho family proteins and by inducing the reorganization of the cortical actin filaments. Acts as a GTPase activator in vitro for RAC1. The polypeptide is Rho GTPase-activating protein 17 (Arhgap17) (Mus musculus (Mouse)).